We begin with the raw amino-acid sequence, 573 residues long: Methionine--tRNA ligase (573 aa).

The short motif at 10–20 (PYVNSVPHLGN) is the 'HIGH' region element. The Zn(2+) site is built by C143, C146, C156, and C159. Positions 333–337 (KFSKS) match the 'KMSKS' region motif. K336 lines the ATP pocket.

It belongs to the class-I aminoacyl-tRNA synthetase family. MetG type 1 subfamily. Requires Zn(2+) as cofactor.

It localises to the cytoplasm. The catalysed reaction is tRNA(Met) + L-methionine + ATP = L-methionyl-tRNA(Met) + AMP + diphosphate. Functionally, is required not only for elongation of protein synthesis but also for the initiation of all mRNA translation through initiator tRNA(fMet) aminoacylation. The chain is Methionine--tRNA ligase from Saccharolobus islandicus (strain M.14.25 / Kamchatka #1) (Sulfolobus islandicus).